A 100-amino-acid polypeptide reads, in one-letter code: Putative pterin-4-alpha-carbinolamine dehydratase (100 aa).

This sequence belongs to the pterin-4-alpha-carbinolamine dehydratase family.

It catalyses the reaction (4aS,6R)-4a-hydroxy-L-erythro-5,6,7,8-tetrahydrobiopterin = (6R)-L-erythro-6,7-dihydrobiopterin + H2O. This chain is Putative pterin-4-alpha-carbinolamine dehydratase, found in Alteromonas mediterranea (strain DSM 17117 / CIP 110805 / LMG 28347 / Deep ecotype).